The sequence spans 437 residues: Aspartokinase (437 aa).

Belongs to the aspartokinase family.

It carries out the reaction L-aspartate + ATP = 4-phospho-L-aspartate + ADP. The protein operates within amino-acid biosynthesis; L-lysine biosynthesis via DAP pathway; (S)-tetrahydrodipicolinate from L-aspartate: step 1/4. Its pathway is amino-acid biosynthesis; L-methionine biosynthesis via de novo pathway; L-homoserine from L-aspartate: step 1/3. It participates in amino-acid biosynthesis; L-threonine biosynthesis; L-threonine from L-aspartate: step 1/5. In Chlamydia muridarum (strain MoPn / Nigg), this protein is Aspartokinase (lysC).